Consider the following 696-residue polypeptide: uncharacterized protein (696 aa).

Residues 293 to 426 enclose the GGDEF domain; that stretch reads SVLGLVLLGF…GSRQYCFYEE (134 aa). In terms of domain architecture, EAL spans 435–689; sequence RIQLEHALHQ…EITAFLAEGN (255 aa).

This is an uncharacterized protein from Synechocystis sp. (strain ATCC 27184 / PCC 6803 / Kazusa).